Consider the following 494-residue polypeptide: Probable cytosol aminopeptidase (494 aa).

2 residues coordinate Mn(2+): lysine 260 and aspartate 265. Lysine 272 is an active-site residue. Mn(2+) is bound by residues aspartate 283, aspartate 342, and glutamate 344. Arginine 346 is an active-site residue.

Belongs to the peptidase M17 family. Mn(2+) is required as a cofactor.

The protein localises to the cytoplasm. The catalysed reaction is Release of an N-terminal amino acid, Xaa-|-Yaa-, in which Xaa is preferably Leu, but may be other amino acids including Pro although not Arg or Lys, and Yaa may be Pro. Amino acid amides and methyl esters are also readily hydrolyzed, but rates on arylamides are exceedingly low.. It catalyses the reaction Release of an N-terminal amino acid, preferentially leucine, but not glutamic or aspartic acids.. Presumably involved in the processing and regular turnover of intracellular proteins. Catalyzes the removal of unsubstituted N-terminal amino acids from various peptides. This is Probable cytosol aminopeptidase from Bacillus anthracis (strain CDC 684 / NRRL 3495).